We begin with the raw amino-acid sequence, 405 residues long: Argininosuccinate synthase (405 aa).

ATP-binding positions include 10–18 (AYSGGLDTS) and alanine 37. L-citrulline is bound by residues tyrosine 88 and serine 93. Glycine 118 contributes to the ATP binding site. 3 residues coordinate L-aspartate: threonine 120, asparagine 124, and aspartate 125. L-citrulline is bound at residue asparagine 124. The L-citrulline site is built by arginine 128, serine 179, serine 188, glutamate 264, and tyrosine 276.

The protein belongs to the argininosuccinate synthase family. Type 1 subfamily. Homotetramer.

Its subcellular location is the cytoplasm. It catalyses the reaction L-citrulline + L-aspartate + ATP = 2-(N(omega)-L-arginino)succinate + AMP + diphosphate + H(+). It participates in amino-acid biosynthesis; L-arginine biosynthesis; L-arginine from L-ornithine and carbamoyl phosphate: step 2/3. This Pseudomonas syringae pv. syringae (strain B728a) protein is Argininosuccinate synthase.